A 727-amino-acid polypeptide reads, in one-letter code: Cyclin-T1 (727 aa).

Residue Ser-117 is modified to Phosphoserine. The short motif at Lys-253 to Asp-270 is the Nuclear localization signal element. Lys-343 is covalently cross-linked (Glycyl lysine isopeptide (Lys-Gly) (interchain with G-Cter in SUMO2)). Ser-389 bears the Phosphoserine mark. Residues Ser-389–Ala-420 are a coiled coil. Lys-391 is modified (N6-acetyllysine). Residue Lys-416 forms a Glycyl lysine isopeptide (Lys-Gly) (interchain with G-Cter in SUMO2) linkage. 2 positions are modified to ADP-ribosylserine: Ser-417 and Ser-475. Positions Ile-481–Gln-551 are histidine-rich domain (HRD). A Glycyl lysine isopeptide (Lys-Gly) (interchain with G-Cter in SUMO2) cross-link involves residue Lys-482. Lys-486 bears the N6-(ADP-ribosyl)lysine mark. The segment covering Val-487 to His-507 has biased composition (basic and acidic residues). Disordered regions lie at residues Val-487–Cys-631 and Tyr-691–Lys-727. ADP-ribosylhistidine is present on His-488. A phosphoserine mark is found at Ser-496 and Ser-500. Over residues Lys-508–His-531 the composition is skewed to basic residues. His-531 carries the ADP-ribosylhistidine modification. ADP-ribosylserine occurs at positions 532, 550, and 553. His-557 is modified (ADP-ribosylhistidine). Residues Ser-561–Ser-571 show a composition bias toward low complexity. Position 564 is an ADP-ribosylserine (Ser-564). A Phosphoserine modification is found at Ser-565. Residues Gly-616–Cys-631 show a composition bias toward polar residues. Pro residues predominate over residues Pro-711 to Lys-727.

This sequence belongs to the cyclin family. Cyclin C subfamily. As to quaternary structure, cyclin-T1 is the predominant cyclin that associates with CDK9 to form a heterodimer called P-TEFb. P-TEFb forms a complex with AFF4/AF5Q31. Component of a complex which is at least composed of HTATSF1/Tat-SF1, P-TEFb complex, RNA pol II, SUPT5H, and NCL/nucleolin. Component of the 7SK snRNP complex at least composed of P-TEFb (composed of CDK9 and CCNT1/cyclin-T1), HEXIM1, HEXIM2, BCDIN3, SART3 proteins and 7SK and U6 snRNAs. Interacts (via central region) with ZMYND8 (via N-terminus); the interaction is direct and the association appears to occur between homodimeric ZMYND8 and the activated form of the P-TEFb complex. Interacts with BRD4, targets chromatin binding. Interacts with JMJD6. Interacts with MDFIC. Interacts with HSF1. Interacts with HTATSF1. Interacts with TBX21. (Microbial infection) Binds to BIV Tat, however Tat binds TAR RNA in a Cyc-T1-independent mode. ADP-ribosylation on serine residues by PARP1 in response to DNA damage disrupts the phase separation activity of CCNT1, thereby preventing activation of CDK9.

Its subcellular location is the nucleus. Its function is as follows. Regulatory subunit of the cyclin-dependent kinase pair (CDK9/cyclin-T1) complex, also called positive transcription elongation factor B (P-TEFb), which facilitates the transition from abortive to productive elongation by phosphorylating the CTD (C-terminal domain) of the large subunit of RNA polymerase II (RNA Pol II). Required to activate the protein kinase activity of CDK9: acts by mediating formation of liquid-liquid phase separation (LLPS) that enhances binding of P-TEFb to the CTD of RNA Pol II. In Bos taurus (Bovine), this protein is Cyclin-T1 (CCNT1).